A 396-amino-acid chain; its full sequence is DNA replication and repair protein RecF (396 aa).

30–37 (GANGSGKT) serves as a coordination point for ATP.

The protein belongs to the RecF family.

It localises to the cytoplasm. Functionally, the RecF protein is involved in DNA metabolism; it is required for DNA replication and normal SOS inducibility. RecF binds preferentially to single-stranded, linear DNA. It also seems to bind ATP. This is DNA replication and repair protein RecF from Thermomicrobium roseum (strain ATCC 27502 / DSM 5159 / P-2).